Here is a 412-residue protein sequence, read N- to C-terminus: 1-deoxy-D-xylulose 5-phosphate reductoisomerase (412 aa).

NADPH is bound by residues T5, G6, S7, I8, G31, R32, N33, and N125. Position 126 (K126) interacts with 1-deoxy-D-xylulose 5-phosphate. E127 contributes to the NADPH binding site. D151 lines the Mn(2+) pocket. 1-deoxy-D-xylulose 5-phosphate is bound by residues S152, E153, S189, and H212. E153 is a binding site for Mn(2+). Residue G218 coordinates NADPH. Positions 225, 230, 231, and 234 each coordinate 1-deoxy-D-xylulose 5-phosphate. Residue E234 coordinates Mn(2+).

Belongs to the DXR family. It depends on Mg(2+) as a cofactor. Mn(2+) serves as cofactor.

It carries out the reaction 2-C-methyl-D-erythritol 4-phosphate + NADP(+) = 1-deoxy-D-xylulose 5-phosphate + NADPH + H(+). It functions in the pathway isoprenoid biosynthesis; isopentenyl diphosphate biosynthesis via DXP pathway; isopentenyl diphosphate from 1-deoxy-D-xylulose 5-phosphate: step 1/6. Its function is as follows. Catalyzes the NADPH-dependent rearrangement and reduction of 1-deoxy-D-xylulose-5-phosphate (DXP) to 2-C-methyl-D-erythritol 4-phosphate (MEP). This is 1-deoxy-D-xylulose 5-phosphate reductoisomerase from Prochlorococcus marinus (strain SARG / CCMP1375 / SS120).